The primary structure comprises 76 residues: Conotoxin Im6.9 (76 aa).

Residues 1–19 (MEKLTILLLVTAVLMSTQA) form the signal peptide. The propeptide occupies 20 to 45 (LMQSGIEKRQRAKIKFFSKRKTTAER). 3 disulfides stabilise this stretch: cysteine 51/cysteine 65, cysteine 58/cysteine 69, and cysteine 64/cysteine 73.

The protein belongs to the conotoxin O2 superfamily. Expressed by the venom duct.

The protein resides in the secreted. Its function is as follows. Probable neurotoxin. This is Conotoxin Im6.9 from Conus imperialis (Imperial cone).